The chain runs to 473 residues: Xylan O-acetyltransferase 14 (473 aa).

Polar residues predominate over residues 1-17 (MTTTGSTPPRKNRSNVT). The segment at 1 to 22 (MTTTGSTPPRKNRSNVTGGEGG) is disordered. Residues 1 to 54 (MTTTGSTPPRKNRSNVTGGEGGSLEEYAWRAAGEAAAAKKATRAWGVSVSLRSH) are Cytoplasmic-facing. A helical; Signal-anchor for type II membrane protein membrane pass occupies residues 55–75 (FSSLVLLLLLLLVALAVSATT). The segment at 76–101 (KNGDPAETPHAPPLPPPASIKLPSSS) is disordered. The Lumenal segment spans residues 76–473 (KNGDPAETPH…NQLLYAHIVS (398 aa)). 4 disulfides stabilise this stretch: cysteine 108-cysteine 159, cysteine 130-cysteine 195, cysteine 139-cysteine 455, and cysteine 370-cysteine 451. Positions 182–184 (GDS) match the GDS motif motif. Serine 184 functions as the Nucleophile in the catalytic mechanism. N-linked (GlcNAc...) asparagine glycans are attached at residues asparagine 209, asparagine 223, and asparagine 414. The active-site Proton donor is the aspartate 450. The DXXH motif motif lies at 450-453 (DCIH). The active-site Proton acceptor is the histidine 453.

The protein belongs to the PC-esterase family. TBL subfamily.

The protein resides in the golgi apparatus membrane. Xylan acetyltransferase required for 2-O- and 3-O-monoacetylation of xylosyl residues in xylan. Catalyzes the 2-O-acetylation of xylan, followed by nonenzymatic acetyl migration to the O-3 position, resulting in products that are monoacetylated at both O-2 and O-3 positions. This Oryza sativa subsp. japonica (Rice) protein is Xylan O-acetyltransferase 14.